Reading from the N-terminus, the 163-residue chain is Cytochrome b6-f complex subunit 4 (163 aa).

Transmembrane regions (helical) follow at residues 36 to 56, 95 to 115, and 131 to 151; these read LLYI…GLAV, LLGV…PFLE, and TVFL…TLPI.

It belongs to the cytochrome b family. PetD subfamily. The 4 large subunits of the cytochrome b6-f complex are cytochrome b6, subunit IV (17 kDa polypeptide, petD), cytochrome f and the Rieske protein, while the 4 small subunits are petG, petL, petM and petN. The complex functions as a dimer.

The protein localises to the plastid. It is found in the chloroplast thylakoid membrane. Functionally, component of the cytochrome b6-f complex, which mediates electron transfer between photosystem II (PSII) and photosystem I (PSI), cyclic electron flow around PSI, and state transitions. The polypeptide is Cytochrome b6-f complex subunit 4 (Pelargonium hortorum (Common geranium)).